Consider the following 128-residue polypeptide: Fluoride-specific ion channel FluC (128 aa).

The next 4 membrane-spanning stretches (helical) occupy residues 7–27 (AVLL…LIAV), 34–54 (TGFP…IGMI), 70–90 (LLLA…MYEI), and 104–124 (LYLI…MALA). Positions 78 and 81 each coordinate Na(+).

It belongs to the fluoride channel Fluc/FEX (TC 1.A.43) family.

The protein localises to the cell inner membrane. The catalysed reaction is fluoride(in) = fluoride(out). Na(+) is not transported, but it plays an essential structural role and its presence is essential for fluoride channel function. In terms of biological role, fluoride-specific ion channel. Important for reducing fluoride concentration in the cell, thus reducing its toxicity. This is Fluoride-specific ion channel FluC from Prosthecochloris aestuarii (strain DSM 271 / SK 413).